A 317-amino-acid chain; its full sequence is Biotin synthase (317 aa).

The Radical SAM core domain maps to 42-260 (NRIQLSTLLS…IAVTRLCMPK (219 aa)). 3 residues coordinate [4Fe-4S] cluster: cysteine 57, cysteine 61, and cysteine 64. [2Fe-2S] cluster-binding residues include cysteine 101, cysteine 132, cysteine 192, and arginine 264.

The protein belongs to the radical SAM superfamily. Biotin synthase family. As to quaternary structure, homodimer. Requires [4Fe-4S] cluster as cofactor. [2Fe-2S] cluster serves as cofactor.

It catalyses the reaction (4R,5S)-dethiobiotin + (sulfur carrier)-SH + 2 reduced [2Fe-2S]-[ferredoxin] + 2 S-adenosyl-L-methionine = (sulfur carrier)-H + biotin + 2 5'-deoxyadenosine + 2 L-methionine + 2 oxidized [2Fe-2S]-[ferredoxin]. Its pathway is cofactor biosynthesis; biotin biosynthesis; biotin from 7,8-diaminononanoate: step 2/2. Its function is as follows. Catalyzes the conversion of dethiobiotin (DTB) to biotin by the insertion of a sulfur atom into dethiobiotin via a radical-based mechanism. The protein is Biotin synthase of Thiobacillus denitrificans (strain ATCC 25259 / T1).